The following is a 493-amino-acid chain: Adenylyltransferase and sulfurtransferase uba4 (493 aa).

Residues glycine 99, aspartate 120, 127–131 (SNLHR), lysine 144, and 188–189 (DN) each bind ATP. Zn(2+)-binding residues include cysteine 237 and cysteine 240. Cysteine 254 functions as the Glycyl thioester intermediate; for adenylyltransferase activity in the catalytic mechanism. Residues cysteine 316 and cysteine 319 each coordinate Zn(2+). The Rhodanese domain occupies 376–491 (INKEPTIIDV…WREQIDPDWP (116 aa)). Catalysis depends on cysteine 446, which acts as the Cysteine persulfide intermediate; for sulfurtransferase activity.

This sequence in the N-terminal section; belongs to the HesA/MoeB/ThiF family. UBA4 subfamily. Zn(2+) is required as a cofactor.

Its subcellular location is the cytoplasm. It is found in the cytosol. The catalysed reaction is [molybdopterin-synthase sulfur-carrier protein]-C-terminal Gly-Gly + ATP + H(+) = [molybdopterin-synthase sulfur-carrier protein]-C-terminal Gly-Gly-AMP + diphosphate. It catalyses the reaction [molybdopterin-synthase sulfur-carrier protein]-C-terminal Gly-Gly-AMP + S-sulfanyl-L-cysteinyl-[cysteine desulfurase] + AH2 = [molybdopterin-synthase sulfur-carrier protein]-C-terminal-Gly-aminoethanethioate + L-cysteinyl-[cysteine desulfurase] + A + AMP + 2 H(+). The protein operates within tRNA modification; 5-methoxycarbonylmethyl-2-thiouridine-tRNA biosynthesis. It functions in the pathway cofactor biosynthesis; molybdopterin biosynthesis. Plays a central role in 2-thiolation of mcm(5)S(2)U at tRNA wobble positions of cytosolic tRNA(Lys), tRNA(Glu) and tRNA(Gln). Also essential during biosynthesis of the molybdenum cofactor. Acts by mediating the C-terminal thiocarboxylation of sulfur carriers urm1 and mocs2a. Its N-terminus first activates urm1 and mocs2a as acyl-adenylates (-COAMP), then the persulfide sulfur on the catalytic cysteine is transferred to urm1 and mocs2a to form thiocarboxylation (-COSH) of their C-terminus. The reaction probably involves hydrogen sulfide that is generated from the persulfide intermediate and that acts as a nucleophile towards urm1 and mocs2a. Subsequently, a transient disulfide bond is formed. Does not use thiosulfate as sulfur donor; nfs1 probably acting as a sulfur donor for thiocarboxylation reactions. The chain is Adenylyltransferase and sulfurtransferase uba4 from Aspergillus fumigatus (strain CBS 144.89 / FGSC A1163 / CEA10) (Neosartorya fumigata).